Consider the following 425-residue polypeptide: Formyl-CoA:oxalate CoA-transferase (425 aa).

CoA-binding positions include 17-18, Arg-38, 72-75, 96-98, Arg-104, and 136-139; these read QS, LDTK, NFG, and KVYE. Residue Asp-168 is the Nucleophile of the active site. 247 to 249 contributes to the substrate binding site; sequence GGQ.

This sequence belongs to the CoA-transferase III family. Frc subfamily. In terms of assembly, homodimer.

It carries out the reaction formyl-CoA + oxalate = oxalyl-CoA + formate. The protein operates within metabolic intermediate degradation; oxalate degradation; CO(2) and formate from oxalate: step 1/2. In terms of biological role, involved in the catabolism of oxalate and in the adapatation to low pH via the induction of the oxalate-dependent acid tolerance response (ATR). Catalyzes the transfer of the CoA moiety from formyl-CoA to oxalate. This is Formyl-CoA:oxalate CoA-transferase from Bradyrhizobium sp. (strain ORS 278).